The chain runs to 425 residues: Xyloglucan O-acetyltransferase 2 (425 aa).

Residues 1–18 (MGSPFKDHHTLHPSLVRK) are Cytoplasmic-facing. A helical; Signal-anchor for type II membrane protein membrane pass occupies residues 19 to 38 (LIPWTFYAMVPLVLFRVYLY). Residues 39–425 (PYPLHHTTTT…KWEYASRREQ (387 aa)) are Lumenal-facing. Disulfide bonds link Cys68–Cys118, Cys89–Cys154, Cys98–Cys398, and Cys313–Cys394. An N-linked (GlcNAc...) asparagine glycan is attached at Asn85. Residues 141–143 (GDS) carry the GDS motif motif. Residue Ser143 is the Nucleophile of the active site. Residues Asn183 and Asn259 are each glycosylated (N-linked (GlcNAc...) asparagine). The active-site Proton donor is the Asp393. The short motif at 393–396 (DCVH) is the DXXH motif element. The active-site Proton acceptor is His396.

Belongs to the PC-esterase family. TBL subfamily.

The protein localises to the golgi apparatus membrane. Functionally, xyloglucan acetyltransferase that catalyzes the acetylation of fucosylated Gal residues on xyloglucan side chains. Predominantly catalyze 6-O-monoacetylation of Gal residues in the Fuc-Gal-Xyl trisaccharide side chains of xyloglucan oligomers. The polypeptide is Xyloglucan O-acetyltransferase 2 (Populus trichocarpa (Western balsam poplar)).